Here is a 145-residue protein sequence, read N- to C-terminus: Neutral phospholipase A2 paradoxin-like beta chain (145 aa).

The first 27 residues, 1–27, serve as a signal peptide directing secretion; it reads MHPAHLLVLLAVCVSLLGASDIPPLPL. 7 cysteine pairs are disulfide-bonded: cysteine 38–cysteine 98, cysteine 54–cysteine 144, cysteine 56–cysteine 72, cysteine 71–cysteine 125, cysteine 78–cysteine 118, cysteine 87–cysteine 111, and cysteine 105–cysteine 116.

This sequence belongs to the phospholipase A2 family. Group I subfamily. N49 sub-subfamily. Heterotrimer of alpha, beta, and gamma chains; non-covalently linked. As to expression, expressed by the venom gland.

The protein localises to the secreted. In terms of biological role, heterotrimer: Snake venom phospholipase A2 (PLA2) heterotrimer that acts as a potent presynaptic neurotoxin by blocking synaptic transmission and synaptic vesicle recycling. May act by binding in a calcium-dependent fashion to neurotonal pentraxin-1 (NPTX1) and neurotonal pentraxin-2 (NPTX2), but not to neuronal pentraxin receptor (NPTXR). Also binds to taipoxin-associated calcium binding protein 49 (RCN2), a protein localized in the lumen of endoplasmic reticulum. Monomer (beta chain): Snake venom phospholipase A2 homolog that is neither toxic nor enzymatically active. Does not bind calcium. In Oxyuranus microlepidotus (Inland taipan), this protein is Neutral phospholipase A2 paradoxin-like beta chain.